The primary structure comprises 374 residues: Homeobox protein knotted-1-like 13 (374 aa).

A disordered region spans residues 214 to 242; sequence TGASPGEGTGATMSDGEDDQADSEANMYD. The ELK domain occupies 270–290; the sequence is ELKHELKQGYKEKLIDIREEI. A DNA-binding region (homeobox; TALE-type) is located at residues 291–354; it reads LRKRRAGKLP…NQRKRNWHSN (64 aa). The segment at 347–374 is disordered; sequence RKRNWHSNPSSSTSVKTKRKSNAGDNNS.

The protein belongs to the TALE/KNOX homeobox family. As to expression, isoforms 1 and 2 are expressed in roots, stems, shoot meristem, leaf blades, leaf sheaths and flowers. Isoform 3 is expressed in stems, shoot meristem, rachis, leaf blades and leaf sheaths.

Its subcellular location is the nucleus. Its function is as follows. Isoform 3 acts as a transcription activator, but isoforms 1 and 2 do not. This Oryza sativa subsp. japonica (Rice) protein is Homeobox protein knotted-1-like 13 (OSH45).